Reading from the N-terminus, the 297-residue chain is MTFQKAIVTEAPHRARLVSDRLIPKLRDDYILVRTVSVALNPTDWKHILRLSPPGCLVGCDYAGIVEEVGRSVKKPFKKGDRVCGFAHGGNAVFSDDGTFAEVITVKGDIQAWIPENLSFQEAATLGVGIKTVGQGLYQSLKLSWPTTPIEHAVPILIYGGSTATGTLAIQLAKLSGYRVITTCSPHHFELMKSLGADLVFDYHEITSADHIRRCTQNKLKLVFDTISIDVSARFCDRAMSTEGGEYSALLDVSIARTNISSRWTLAYTVLGEGFTSEQIVFQPYPTTMSSGRNFGM.

NADP(+) is bound by residues 162–165 and Tyr-203; that span reads STAT.

Belongs to the zinc-containing alcohol dehydrogenase family. In terms of assembly, monomer.

Trans-enoyl reductase; part of the diffuse TOX2 gene cluster that mediates the biosynthesis of the HC-toxin, cyclic tetrapeptide of structure cyclo(D-Pro-L-Ala-D-Ala-L-Aeo), where Aeo stands for 2-amino-9,10-epoxi-8-oxodecanoic acid. HC-toxin is a determinant of specificity and virulence in the interaction between the producing fungus and its host, maize. TOXD does not seem to play a role in HC-toxin biosynthesis. The polypeptide is Trans-enoyl reductase TOXD (Cochliobolus carbonum (Maize leaf spot fungus)).